Here is a 1013-residue protein sequence, read N- to C-terminus: Prominin-like protein (1013 aa).

Residues 32 to 52 form a helical membrane-spanning segment; that stretch reads IAYLAICGLSVAIFGFALATL. 2 N-linked (GlcNAc...) asparagine glycosylation sites follow: N99 and N116. Helical transmembrane passes span 215–235, 489–509, and 535–555; these read CGICLLILIIGLIFGIIIAFV, VVSLIVCLLILLVLFILIFAL, and LLLAILLIFCVFSFIALVGLF. N-linked (GlcNAc...) asparagine glycosylation is found at N576, N618, N803, and N824. Residues 852–872 traverse the membrane as a helical segment; that stretch reads INGFWVGILLCALLFLPILFV. The interval 918-1013 is disordered; the sequence is ANVPKKRRKA…YYYPGASEQD (96 aa). The N-linked (GlcNAc...) asparagine glycan is linked to N949. Positions 950-963 are enriched in gly residues; the sequence is RSGGDRGGGGGDGA.

Belongs to the prominin family.

The protein localises to the membrane. This is Prominin-like protein from Drosophila melanogaster (Fruit fly).